Reading from the N-terminus, the 299-residue chain is HTH-type transcriptional regulator PgrR (299 aa).

The HTH lysR-type domain occupies 4 to 61 (EEIADLMAFVVVAEERSFTRAAARLSMAQSALSQIVRRIEERLGLRLLTRTTRSVVPT). A DNA-binding region (H-T-H motif) is located at residues 21–40 (FTRAAARLSMAQSALSQIVR).

This sequence belongs to the LysR transcriptional regulatory family.

Its function is as follows. Regulates the expression of genes involved in peptidoglycan (PG) degradation. Could play a role in switch control between recycling and degradation of PG peptides. Negatively regulates the expression of the ycjY-ymjD-ymjC-mpaA operon by binding to the PgrR-box. In addition, other genes are predicted to be under the control of PgrR, including genes related to membrane formation and function. This is HTH-type transcriptional regulator PgrR (pgrR) from Escherichia coli (strain K12).